We begin with the raw amino-acid sequence, 177 residues long: Transcription termination/antitermination protein NusG (177 aa).

The KOW domain occupies 126–156 (PGETVRVIDGPFADFNGVVEEVNYEKSRIQV).

This sequence belongs to the NusG family.

Its function is as follows. Participates in transcription elongation, termination and antitermination. The polypeptide is Transcription termination/antitermination protein NusG (Pseudomonas aeruginosa (strain ATCC 15692 / DSM 22644 / CIP 104116 / JCM 14847 / LMG 12228 / 1C / PRS 101 / PAO1)).